Reading from the N-terminus, the 146-residue chain is Protein SprT-like (146 aa).

Residues 4-142 enclose the SprT-like domain; it reads NEYVKQVSLE…GRCKGKLRLL (139 aa). His64 contributes to the Zn(2+) binding site. Residue Glu65 is part of the active site. His68 contacts Zn(2+).

This sequence belongs to the SprT family. Zn(2+) is required as a cofactor.

Its subcellular location is the cytoplasm. The polypeptide is Protein SprT-like (Streptococcus gordonii (strain Challis / ATCC 35105 / BCRC 15272 / CH1 / DL1 / V288)).